The primary structure comprises 135 residues: Protein PsiE homolog (135 aa).

The next 4 membrane-spanning stretches (helical) occupy residues 20–40 (VGLI…TFHL), 54–74 (YMLI…ALIV), 82–102 (HFPL…LIIV), and 107–127 (PIDT…LYLA).

Belongs to the PsiE family.

The protein resides in the cell inner membrane. The protein is Protein PsiE homolog of Yersinia enterocolitica serotype O:8 / biotype 1B (strain NCTC 13174 / 8081).